The sequence spans 183 residues: Threonylcarbamoyl-AMP synthase (183 aa).

The YrdC-like domain occupies 1–183 (MELAQIVERL…IFSRQIFRRG (183 aa)).

Belongs to the SUA5 family. TsaC subfamily.

It localises to the cytoplasm. It carries out the reaction L-threonine + hydrogencarbonate + ATP = L-threonylcarbamoyladenylate + diphosphate + H2O. In terms of biological role, required for the formation of a threonylcarbamoyl group on adenosine at position 37 (t(6)A37) in tRNAs that read codons beginning with adenine. Catalyzes the conversion of L-threonine, HCO(3)(-)/CO(2) and ATP to give threonylcarbamoyl-AMP (TC-AMP) as the acyladenylate intermediate, with the release of diphosphate. The chain is Threonylcarbamoyl-AMP synthase from Mannheimia succiniciproducens (strain KCTC 0769BP / MBEL55E).